Here is a 415-residue protein sequence, read N- to C-terminus: Actin-like protein 9 (415 aa).

The tract at residues M1 to T22 is disordered.

Belongs to the actin family. Interacts with ACTL7A.

The protein localises to the cytoplasmic vesicle. Its subcellular location is the secretory vesicle. It localises to the acrosome. It is found in the cytoplasm. The protein resides in the cytoskeleton. The protein localises to the perinuclear theca. Testis-specic protein that plays an important role in fusion of proacrosomal vesicles and perinuclear theca formation. The sequence is that of Actin-like protein 9 (Actl9) from Mus musculus (Mouse).